A 194-amino-acid chain; its full sequence is Lymphocyte antigen 6 complex locus protein G5b (194 aa).

An N-terminal signal peptide occupies residues M1–G18. The UPAR/Ly6 domain maps to R26–G118. Cystine bridges form between C28–C55, C31–C40, C47–C73, C81–C98, and C99–C104. An N-linked (GlcNAc...) asparagine glycan is attached at N182.

Post-translationally, N-glycosylated.

It is found in the secreted. The chain is Lymphocyte antigen 6 complex locus protein G5b (Ly6g5b) from Rattus norvegicus (Rat).